Here is a 1395-residue protein sequence, read N- to C-terminus: MRDLLKIHKLEQKEQDFDAIRVGLASPEKIRSWSYGEVKKPETINYRTFRPEREGLFCAKIFGPMKDFECLCSKYKRMKFRNVVCEKCGVEVTHSKVRRERMGHIELAAPVAHIWYLKSLPSRLGLLMDMTLKDIERVLYFEAFLVTDPGSTSLVHKQLLTEEMYFDALDEYGDDEFEAKMGAEAIQDVLSDMKLEVEAANLRENSLNTKSQTKLKKYNKRLKLVNSLIQSGNKPEWMVLKVLPVLPPDLRPLVPLDGGRFATSDLNDLYRRVINRNNRLARLLELDAPEIIVRNEKRMLQEAVDSLIDNGRRGRSVMGNNRRPLKSISDMIKGKQGRFRQNLLGKRVDYSGRSVIVCGPYLKLHQCGLPKKMALELFKPFIYNRLQVKGLASTIKVAKKMVESESPEVWDVLERVVHQHPVLLNRAPTLHRLGIQAFEPLLIEGKAIQLHPLVCGAFNADFDGDQMAVHVPLSEEAQLEARTLMLASNNVLHLASGEPIIVPSQDVILGLYYMTREMINQKGEGLIFANATEALNAYESGNVTLHAKVKLRIQDYQKIDGKFESSTKRIVDTTVGRAIFSRILPNGLSFDLINEAISKKVVSDLIHVCYRTQELKQTVVFADQMMYMGFQYSTKSGISFCSNDMIIPDSKAKMIEQAKTQVKDIQEQFSKGVVTDGERYNKVIDIWSRTSEKVAKAMMDEIGFEDFIDADGKTQKLASFNSVYMMADSGARGSSAQMRQLSGMRGLMAKPDGSIIETPITSNFREGLNNMQYFISTHGARKGLADTALKTANSGYLTRRLVDVGQDLVITEDDCGTDNGLIMKAVIDGGNIVQTLGVVTLGRVTAEDILMPDSTEVFLEKGHLVSLDDSDKINELGIESIKVRSAITCDTRYGVCSSCYGNDMARGHKIGVGEAIGVIAAQSIGEPGTQLTMRTFHIGGAASASTTISSVNVNTDGVAHFENLKSITNENNNLVVISRSSEVTIRNNKGQEVERYKIPYGAIVHVQEGGKVKAKDKIVDWDPHTHPIISEQAGRVIFVDFVEGVTVNKNTDPLTGLTFFEMIDEAERSTAAKGLKPLIKMVEESDSEVVLSTHYLPSTVKINLDDNQVIVAGEVLAKIPKDLSKTSDITGGLPRVADLFEARKAKDHSILVEATGVISFGSSTKSKDRLIITNSEGEAIEMMIHKWRQINVFDGETIEKGDVISDGPSNPHDILRLLGVEALANYVVREVQNVYRLQGVNISDKHIEVIVKQMLRKVEVLDAGDSSFVNGETTEYVRVIETNKQLEVQGKELIIYQRLLMGITKASLATESFISAASFQETTRVLTEASTTGRVDTLQGLKENVIVGRLIPAGTGFKHHQKRRAQYVASITQTIDAQQALADQLNEAEEQAQEG.

Zn(2+)-binding residues include Cys-70, Cys-72, Cys-85, and Cys-88. Positions 461, 463, and 465 each coordinate Mg(2+). Zn(2+)-binding residues include Cys-815, Cys-889, Cys-896, and Cys-899.

Belongs to the RNA polymerase beta' chain family. The RNAP catalytic core consists of 2 alpha, 1 beta, 1 beta' and 1 omega subunit. When a sigma factor is associated with the core the holoenzyme is formed, which can initiate transcription. Mg(2+) serves as cofactor. The cofactor is Zn(2+).

The enzyme catalyses RNA(n) + a ribonucleoside 5'-triphosphate = RNA(n+1) + diphosphate. In terms of biological role, DNA-dependent RNA polymerase catalyzes the transcription of DNA into RNA using the four ribonucleoside triphosphates as substrates. This chain is DNA-directed RNA polymerase subunit beta', found in Ruthia magnifica subsp. Calyptogena magnifica.